We begin with the raw amino-acid sequence, 203 residues long: MNSESVLEEIVLELYRNKLFKIGEYRLTSGKISPYYIDLRILPSYYDIYSKIIDISLSKLEKLNFDIVVGIESAGIIHASFIACKTHKPVGYVRKKPKQHGTKRLVEGIVADRNVLVVDDVATTGGSLEHAVNAVRSMGGIVEKAFVFVDREEGARERLKRLGVELISLMNIWFIINVLVKHRLIDEQTYYLIKNYLNREKHS.

5-phospho-alpha-D-ribose 1-diphosphate contacts are provided by residues Arg94, Lys95, Lys98, His100, and 119 to 127 (DDVATTGGS). Thr123 and Arg151 together coordinate orotate.

This sequence belongs to the purine/pyrimidine phosphoribosyltransferase family. PyrE subfamily. As to quaternary structure, homodimer. Requires Mg(2+) as cofactor.

It carries out the reaction orotidine 5'-phosphate + diphosphate = orotate + 5-phospho-alpha-D-ribose 1-diphosphate. It functions in the pathway pyrimidine metabolism; UMP biosynthesis via de novo pathway; UMP from orotate: step 1/2. Catalyzes the transfer of a ribosyl phosphate group from 5-phosphoribose 1-diphosphate to orotate, leading to the formation of orotidine monophosphate (OMP). This is Orotate phosphoribosyltransferase from Staphylothermus marinus (strain ATCC 43588 / DSM 3639 / JCM 9404 / F1).